The following is a 358-amino-acid chain: Putative zinc metalloprotease RC0203 (358 aa).

His18 serves as a coordination point for Zn(2+). Residue Glu19 is part of the active site. Zn(2+) is bound at residue His22. 4 helical membrane-spanning segments follow: residues 52–71, 97–119, 285–307, and 332–351; these read GVRW…IYGY, FLIV…AGFY, YLLF…IPVL, and ILLQ…AVSN. Residues 102–186 form the PDZ domain; it reads AGPLINYLLA…STLTIERKSE (85 aa).

The protein belongs to the peptidase M50B family. It depends on Zn(2+) as a cofactor.

It is found in the cell inner membrane. This is Putative zinc metalloprotease RC0203 from Rickettsia conorii (strain ATCC VR-613 / Malish 7).